The following is a 73-amino-acid chain: Carboxysome shell vertex protein CsoS4B (73 aa).

Positions 1–68 (MVCTQRVAGL…TDLTIGGIID (68 aa)) constitute a BMV domain.

This sequence belongs to the CcmL/EutN family. CsoS4 subfamily. In terms of assembly, homopentamer.

Its subcellular location is the carboxysome. Its function is as follows. Probably forms vertices in the carboxysome, a polyhedral inclusion where RuBisCO (ribulose bisphosphate carboxylase, cbbL-cbbS) is sequestered. Has been modeled to induce curvature upon insertion into an otherwise flat hexagonal layer of major carboxysome subunits. Has not been identified in purified carboxysomes; it is expected to be present in very low amounts. The sequence is that of Carboxysome shell vertex protein CsoS4B from Prochlorococcus marinus subsp. pastoris (strain CCMP1986 / NIES-2087 / MED4).